Consider the following 373-residue polypeptide: MSEKKINLLDLDRKAMRALFADMGEKPFRADQLMKWLYHFGVSDFEEMTNINKVLRQKLAARCEIVAPEISSFQKSTDGTIKFAINVGQGQEVETVYIPEDDRATLCVSSQVGCALECTFCSTGQQGFNRNLTVSEIVGQIWRVSHFLGFAKDTGERPITNVVMMGMGEPLLNLANVIPAMDIMLDDFGFSLSKRRVTLSTSGVVPALDKLGDAIDVALAVSIHAPNDELRDILVPINKKYQLDEFLAGIRRYIAKSNANRGRVTVEYVMLDHINDSTDQAHELAKLMKDTPCKINLIPFNPYPGSPYGRSSNSRIDRFSKVLMEYGFTVIVRKTRGDDIDAACGQLAGDIRDRTKRLAKKRMQENQISVTMN.

E94 (proton acceptor) is an active-site residue. The 240-residue stretch at 100–339 (EDDRATLCVS…VIVRKTRGDD (240 aa)) folds into the Radical SAM core domain. C107 and C344 are oxidised to a cystine. [4Fe-4S] cluster-binding residues include C114, C118, and C121. S-adenosyl-L-methionine contacts are provided by residues 168 to 169 (GE), S200, 222 to 224 (SIH), and N301. C344 (S-methylcysteine intermediate) is an active-site residue.

This sequence belongs to the radical SAM superfamily. RlmN family. The cofactor is [4Fe-4S] cluster.

It localises to the cytoplasm. The enzyme catalyses adenosine(2503) in 23S rRNA + 2 reduced [2Fe-2S]-[ferredoxin] + 2 S-adenosyl-L-methionine = 2-methyladenosine(2503) in 23S rRNA + 5'-deoxyadenosine + L-methionine + 2 oxidized [2Fe-2S]-[ferredoxin] + S-adenosyl-L-homocysteine. The catalysed reaction is adenosine(37) in tRNA + 2 reduced [2Fe-2S]-[ferredoxin] + 2 S-adenosyl-L-methionine = 2-methyladenosine(37) in tRNA + 5'-deoxyadenosine + L-methionine + 2 oxidized [2Fe-2S]-[ferredoxin] + S-adenosyl-L-homocysteine. Functionally, specifically methylates position 2 of adenine 2503 in 23S rRNA and position 2 of adenine 37 in tRNAs. m2A2503 modification seems to play a crucial role in the proofreading step occurring at the peptidyl transferase center and thus would serve to optimize ribosomal fidelity. The protein is Dual-specificity RNA methyltransferase RlmN of Shewanella baltica (strain OS155 / ATCC BAA-1091).